The sequence spans 340 residues: Anthranilate phosphoribosyltransferase (340 aa).

5-phospho-alpha-D-ribose 1-diphosphate contacts are provided by residues G82, 85–86 (GD), T90, 92–95 (NISS), 110–118 (KHGGRSVSS), and A122. Position 82 (G82) interacts with anthranilate. S94 lines the Mg(2+) pocket. R168 contacts anthranilate. Mg(2+) contacts are provided by D227 and E228.

This sequence belongs to the anthranilate phosphoribosyltransferase family. In terms of assembly, homodimer. Mg(2+) serves as cofactor.

It carries out the reaction N-(5-phospho-beta-D-ribosyl)anthranilate + diphosphate = 5-phospho-alpha-D-ribose 1-diphosphate + anthranilate. The protein operates within amino-acid biosynthesis; L-tryptophan biosynthesis; L-tryptophan from chorismate: step 2/5. Catalyzes the transfer of the phosphoribosyl group of 5-phosphorylribose-1-pyrophosphate (PRPP) to anthranilate to yield N-(5'-phosphoribosyl)-anthranilate (PRA). This chain is Anthranilate phosphoribosyltransferase, found in Dechloromonas aromatica (strain RCB).